The chain runs to 91 residues: Small ribosomal subunit protein uS15 (91 aa).

The protein belongs to the universal ribosomal protein uS15 family. In terms of assembly, part of the 30S ribosomal subunit. Forms a bridge to the 50S subunit in the 70S ribosome, contacting the 23S rRNA.

One of the primary rRNA binding proteins, it binds directly to 16S rRNA where it helps nucleate assembly of the platform of the 30S subunit by binding and bridging several RNA helices of the 16S rRNA. Functionally, forms an intersubunit bridge (bridge B4) with the 23S rRNA of the 50S subunit in the ribosome. This Rickettsia bellii (strain OSU 85-389) protein is Small ribosomal subunit protein uS15.